The following is a 129-amino-acid chain: Fluoride-specific ion channel FluC (129 aa).

The next 4 helical transmembrane spans lie at 6-26, 35-55, 73-93, and 98-118; these read ILAI…FNGI, IPFG…ILIA, TGVL…FLLL, and IALA…MAGG. The Na(+) site is built by G77 and T80.

This sequence belongs to the fluoride channel Fluc/FEX (TC 1.A.43) family.

The protein localises to the cell inner membrane. The catalysed reaction is fluoride(in) = fluoride(out). Its activity is regulated as follows. Na(+) is not transported, but it plays an essential structural role and its presence is essential for fluoride channel function. Fluoride-specific ion channel. Important for reducing fluoride concentration in the cell, thus reducing its toxicity. The sequence is that of Fluoride-specific ion channel FluC from Sulfurimonas denitrificans (strain ATCC 33889 / DSM 1251) (Thiomicrospira denitrificans (strain ATCC 33889 / DSM 1251)).